Consider the following 788-residue polypeptide: Spastin (788 aa).

Residues 1 to 105 (MVRTKNQSSS…PRSAGGPSSV (105 aa)) are disordered. Residues 1–116 (MVRTKNQSSS…KQNLYVVSFP (116 aa)) lie on the Cytoplasmic side of the membrane. A required for localization to punctate cytoplasmic foci region spans residues 1–227 (MVRTKNQSSS…NRSGSGYSPG (227 aa)). Low complexity-rich tracts occupy residues 8–48 (SSSS…SSHR) and 57–75 (ATNV…SSPD). The segment at residues 117–137 (IIFLFNVLRSLIYQLFCIFRY) is an intramembrane region (helical). The Cytoplasmic portion of the chain corresponds to 138–788 (LYGASTKVIY…WSSDYGDITI (651 aa)). Positions 227 to 788 (GPGDPLLAKQ…WSSDYGDITI (562 aa)) are sufficient for interaction with microtubules and microtubule severing. One can recognise an MIT domain in the interval 240–315 (HRRAFEYISK…SMARDRLHFL (76 aa)). A compositionally biased stretch (basic and acidic residues) spans 330-353 (KEEQKPNPSREQHQKPQKAREAAD). Residues 330–484 (KEEQKPNPSR…SGSGSGASTP (155 aa)) form a disordered region. The segment covering 380–400 (LTTPRISATATTPTSSSSLAS) has biased composition (low complexity). Composition is skewed to polar residues over residues 419–433 (NKSQ…SKTS) and 453–469 (QFSS…RTPI). Positions 471–485 (NNGASGSGSGASTPV) are required for interaction with microtubules. ATP is bound at residue 553–560 (GPPGNGKT).

This sequence belongs to the AAA ATPase family. Spastin subfamily. As to quaternary structure, homohexamer. The homohexamer is stabilized by ATP-binding. The homohexamer may adopt a ring conformation through which microtubules pass prior to being severed. Interacts with microtubules. Interacts with atl; may be involved in microtubule dynamics.

Its subcellular location is the membrane. It localises to the cytoplasm. The protein resides in the cytoskeleton. The protein localises to the microtubule organizing center. It is found in the centrosome. Its subcellular location is the chromosome. It localises to the lipid droplet. It carries out the reaction n ATP + n H2O + a microtubule = n ADP + n phosphate + (n+1) alpha/beta tubulin heterodimers.. Its function is as follows. ATP-dependent microtubule severing protein. Stimulates microtubule minus-end depolymerization and poleward microtubule flux in the mitotic spindle. Regulates microtubule stability in the neuromuscular junction synapse. Involved in lipid metabolism by regulating the size and distribution of lipid droplets. Involved in axon regeneration by regulating microtubule severing. The protein is Spastin of Drosophila pseudoobscura pseudoobscura (Fruit fly).